The chain runs to 205 residues: Methylthioribulose-1-phosphate dehydratase (205 aa).

2 residues coordinate Zn(2+): His-96 and His-98.

The protein belongs to the aldolase class II family. MtnB subfamily. Zn(2+) serves as cofactor.

The catalysed reaction is 5-(methylsulfanyl)-D-ribulose 1-phosphate = 5-methylsulfanyl-2,3-dioxopentyl phosphate + H2O. The protein operates within amino-acid biosynthesis; L-methionine biosynthesis via salvage pathway; L-methionine from S-methyl-5-thio-alpha-D-ribose 1-phosphate: step 2/6. Its function is as follows. Catalyzes the dehydration of methylthioribulose-1-phosphate (MTRu-1-P) into 2,3-diketo-5-methylthiopentyl-1-phosphate (DK-MTP-1-P). This Pseudomonas aeruginosa (strain ATCC 15692 / DSM 22644 / CIP 104116 / JCM 14847 / LMG 12228 / 1C / PRS 101 / PAO1) protein is Methylthioribulose-1-phosphate dehydratase.